We begin with the raw amino-acid sequence, 106 residues long: Glutaredoxin-1 (106 aa).

Ala2 carries the N-acetylalanine modification. A Glutaredoxin domain is found at 3 to 106 (QAFVNSKIQP…TRLKQMGALQ (104 aa)). N6-succinyllysine is present on Lys9. 2 cysteine pairs are disulfide-bonded: Cys23–Cys26 and Cys79–Cys83.

It belongs to the glutaredoxin family.

It is found in the cytoplasm. Has a glutathione-disulfide oxidoreductase activity in the presence of NADPH and glutathione reductase. Reduces low molecular weight disulfides and proteins. This Bos taurus (Bovine) protein is Glutaredoxin-1 (GLRX).